Reading from the N-terminus, the 743-residue chain is Polyribonucleotide nucleotidyltransferase (743 aa).

Positions 489 and 495 each coordinate Mg(2+). A KH domain is found at 556-618 (PRIEKMHIGK…PCIDAAIGMI (63 aa)). One can recognise an S1 motif domain in the interval 628-698 (GETYPGKITS…KTGKFKLSRK (71 aa)). The segment at 704–743 (PEGYVEPQPRERRERREGGREGGRNFERRGGDRDHREPRG) is disordered.

This sequence belongs to the polyribonucleotide nucleotidyltransferase family. It depends on Mg(2+) as a cofactor.

The protein localises to the cytoplasm. It carries out the reaction RNA(n+1) + phosphate = RNA(n) + a ribonucleoside 5'-diphosphate. In terms of biological role, involved in mRNA degradation. Catalyzes the phosphorolysis of single-stranded polyribonucleotides processively in the 3'- to 5'-direction. The chain is Polyribonucleotide nucleotidyltransferase from Porphyromonas gingivalis (strain ATCC BAA-308 / W83).